Reading from the N-terminus, the 574-residue chain is Type II methyltransferase M.PaeR7I (574 aa).

It belongs to the N(4)/N(6)-methyltransferase family. As to quaternary structure, monomer.

It carries out the reaction a 2'-deoxyadenosine in DNA + S-adenosyl-L-methionine = an N(6)-methyl-2'-deoxyadenosine in DNA + S-adenosyl-L-homocysteine + H(+). A gamma subtype methylase, recognizes the double-stranded sequence 5'-CTCGAG-3', methylates A-5 on both strands, and protects the DNA from cleavage by the PaeR7I endonuclease. The sequence is that of Type II methyltransferase M.PaeR7I (paeR7IM) from Pseudomonas aeruginosa.